The chain runs to 228 residues: Octanoyltransferase (228 aa).

The BPL/LPL catalytic domain occupies 37 to 217; the sequence is AGGPDTLLLL…AVCDALDGRL (181 aa). Substrate is bound by residues 75 to 82, 147 to 149, and 160 to 162; these read RGGKITWH, AIG, and GFA. Catalysis depends on Cys-178, which acts as the Acyl-thioester intermediate.

This sequence belongs to the LipB family.

The protein resides in the cytoplasm. It catalyses the reaction octanoyl-[ACP] + L-lysyl-[protein] = N(6)-octanoyl-L-lysyl-[protein] + holo-[ACP] + H(+). It functions in the pathway protein modification; protein lipoylation via endogenous pathway; protein N(6)-(lipoyl)lysine from octanoyl-[acyl-carrier-protein]: step 1/2. Functionally, catalyzes the transfer of endogenously produced octanoic acid from octanoyl-acyl-carrier-protein onto the lipoyl domains of lipoate-dependent enzymes. Lipoyl-ACP can also act as a substrate although octanoyl-ACP is likely to be the physiological substrate. In Mycolicibacterium smegmatis (strain ATCC 700084 / mc(2)155) (Mycobacterium smegmatis), this protein is Octanoyltransferase.